The following is a 149-amino-acid chain: Large ribosomal subunit protein uL15 (149 aa).

A disordered region spans residues 1–57 (MRLNDPKPKTGSQHRRRRVGRGIAAGQGASCGFGMRGQKSRSGRPTRPGFEGGQNPL). Positions 23–35 (IAAGQGASCGFGM) are enriched in gly residues.

The protein belongs to the universal ribosomal protein uL15 family. In terms of assembly, part of the 50S ribosomal subunit.

Its function is as follows. Binds to the 23S rRNA. The chain is Large ribosomal subunit protein uL15 from Acaryochloris marina (strain MBIC 11017).